The sequence spans 138 residues: MDLVRFSISIPAELLEKFDRIIEEIGYENRSEAIRDLIRDFIIRREWEVGNEEVAGTITIVYNHDEGDVVKELLDLQHEYLDEIISTLHVHMDEHNCLEVIVVKGKAKRIKMIASRLMSLKGVKHGKLVMTSTGKELL.

Histidine 78, histidine 89, histidine 91, and cysteine 97 together coordinate Ni(2+).

It belongs to the transcriptional regulatory CopG/NikR family. Ni(2+) serves as cofactor.

In terms of biological role, transcriptional regulator. The sequence is that of Putative nickel-responsive regulator from Pyrococcus abyssi (strain GE5 / Orsay).